The sequence spans 259 residues: E3 ubiquitin-protein ligase RNF170 (259 aa).

The Lumenal portion of the chain corresponds to 1–25 (MAKYQGEVQSLKLDDDSVIEGVSDQ). The helical transmembrane segment at 26–46 (VLVAVVVSLALIATLVYALFS) threads the bilayer. Residues 47-202 (RNAHQNIHPE…GGLFWMFRIR (156 aa)) lie on the Cytoplasmic side of the membrane. The segment at 88 to 131 (CPICLHQASLPVETNCGHLFCGTCIVAYWRYGSWLGAISCPICR) adopts an RING-type zinc-finger fold. A helical membrane pass occupies residues 203-223 (IILCLMGAFFYLISPLDFVPE). Residue A224 is a topological domain, lumenal. The helical transmembrane segment at 225-245 (LFGILGFLDDFFVIFLLLIYI) threads the bilayer. At 246–259 (SIMYREVITQRLNR) the chain is on the cytoplasmic side.

Constitutively associated with the ERLIN1/ERLIN 2 complex. Interacts with activated ITPR1.

It localises to the endoplasmic reticulum membrane. The enzyme catalyses S-ubiquitinyl-[E2 ubiquitin-conjugating enzyme]-L-cysteine + [acceptor protein]-L-lysine = [E2 ubiquitin-conjugating enzyme]-L-cysteine + N(6)-ubiquitinyl-[acceptor protein]-L-lysine.. It participates in protein modification; protein ubiquitination. E3 ubiquitin-protein ligase. Plays an essential role in stimulus-induced inositol 1,4,5-trisphosphate receptor type 1 (ITPR1) ubiquitination and degradation via the endoplasmic reticulum-associated degradation (ERAD) pathway. Also involved in ITPR1 turnover in resting cells. Selectively inhibits the TLR3-triggered innate immune response by promoting the 'Lys-48'-linked polyubiquitination and degradation of TLR3. The chain is E3 ubiquitin-protein ligase RNF170 (RNF170) from Bos taurus (Bovine).